The primary structure comprises 127 residues: CST complex subunit TEN1 (127 aa).

It belongs to the TEN1 family. Component of the CST complex, composed of CTC1, TEN1 and STN1. Interacts with STN1. No interaction with POT1A, but competes with it for STN1 binding. In terms of tissue distribution, ubiquitous. High expression in meristematic tissues and in vasculature.

It is found in the nucleus. The protein localises to the chromosome. Its subcellular location is the telomere. Required for the maintenance of meristems and stem cells through the reduction of DNA damage. Promotes telomere integrity by maintaining telomere length and proper architecture of the chromosome terminus. Negatively regulates telomerase repeat addition processivity. Hampers contacts between enzymatically active telomerase and CST complex. This Arabidopsis thaliana (Mouse-ear cress) protein is CST complex subunit TEN1.